The primary structure comprises 296 residues: Dof zinc finger protein DOF3.7 (296 aa).

Residues 41–69 (NTRPNATASNGGSGGNTNNTATMETRKAR) are disordered. The segment covering 45-62 (NATASNGGSGGNTNNTAT) has biased composition (low complexity). The segment at 74–128 (VNCPRCNSTNTKFCYYNNYSLTQPRYFCKGCRRYWTEGGSLRNVPVGGSSRKNKR) adopts a Dof-type zinc-finger fold. Residues C76, C79, C101, and C104 each coordinate Zn(2+). The segment at 115–146 (RNVPVGGSSRKNKRSSTPLASPSNPKLPDLNP) is disordered. Residues 129-138 (SSTPLASPSN) show a composition bias toward polar residues.

Expressed in the phloem of the mother plant, including in roots, stem, leaves and flowers, but not present in the seed and embryo. In maturing siliques, found all through the funiculus connecting the placenta to the ovule, but not in the ovule.

Its subcellular location is the nucleus. Functionally, transcription factor specifically involved in the maternal control of seed germination. Regulates transcription by binding to a 5'-AA[AG]G-3' consensus core sequence. May ensure the inactivity of a component that would be activated to trigger germination as a consequence of red light perception. In Arabidopsis thaliana (Mouse-ear cress), this protein is Dof zinc finger protein DOF3.7 (DOF3.7).